The chain runs to 172 residues: Transcriptional regulator CdrL (172 aa).

A disordered region spans residues 72–113 (SPSAVEEVRTTPASGGRADAEEPGDDGETDAEHADTSATGDE). A DZANK-type zinc finger spans residues 116-160 (CSQCGAELSADHVYCPNCGGKATHRVFCECGDEIRADWAFCPRCG).

This sequence belongs to the CdrL family.

It localises to the cytoplasm. In terms of biological role, transcriptional regulator involved in the control of cell division. This is Transcriptional regulator CdrL from Halobacterium salinarum (strain ATCC 29341 / DSM 671 / R1).